Consider the following 372-residue polypeptide: Alanine racemase (372 aa).

K33 acts as the Proton acceptor; specific for D-alanine in catalysis. K33 is subject to N6-(pyridoxal phosphate)lysine. R131 is a substrate binding site. Y261 (proton acceptor; specific for L-alanine) is an active-site residue. M309 contributes to the substrate binding site.

Belongs to the alanine racemase family. Requires pyridoxal 5'-phosphate as cofactor.

It carries out the reaction L-alanine = D-alanine. Its pathway is amino-acid biosynthesis; D-alanine biosynthesis; D-alanine from L-alanine: step 1/1. Its function is as follows. Catalyzes the interconversion of L-alanine and D-alanine. May also act on other amino acids. The chain is Alanine racemase (alr) from Salinispora arenicola (strain CNS-205).